The chain runs to 283 residues: Shikimate dehydrogenase (NADP(+)) (283 aa).

Shikimate-binding positions include 22 to 24 (SRS) and threonine 69. Lysine 73 (proton acceptor) is an active-site residue. Shikimate-binding residues include asparagine 93 and aspartate 108. Residues 133 to 137 (GAGGS) and leucine 222 contribute to the NADP(+) site. Shikimate is bound at residue tyrosine 224. Glycine 245 is an NADP(+) binding site.

The protein belongs to the shikimate dehydrogenase family. In terms of assembly, homodimer.

The enzyme catalyses shikimate + NADP(+) = 3-dehydroshikimate + NADPH + H(+). The protein operates within metabolic intermediate biosynthesis; chorismate biosynthesis; chorismate from D-erythrose 4-phosphate and phosphoenolpyruvate: step 4/7. Involved in the biosynthesis of the chorismate, which leads to the biosynthesis of aromatic amino acids. Catalyzes the reversible NADPH linked reduction of 3-dehydroshikimate (DHSA) to yield shikimate (SA). In Rhodopseudomonas palustris (strain BisB5), this protein is Shikimate dehydrogenase (NADP(+)).